The primary structure comprises 522 residues: Amphoterin-induced protein 2 (522 aa).

The signal sequence occupies residues 1–39 (MSLRVHTLPTLLGAVVRPGCRELLCLLMITVTVGPGASG). Positions 40–68 (VCPTACICATDIVSCTNKNLSKVPGNLFR) constitute an LRRNT domain. Residues 40–398 (VCPTACICAT…RSHAHEAFNT (359 aa)) lie on the Extracellular side of the membrane. Intrachain disulfides connect C41–C47 and C45–C54. Residue N58 is glycosylated (N-linked (GlcNAc...) asparagine). 6 LRR repeats span residues 69–90 (LIKR…WIPV), 94–115 (KLNT…SFST), 118–139 (NLKC…VFQE), 142–163 (VLEV…AFGG), 166–187 (QLQK…LYVG), and 193–214 (ELMF…HINL). The N-linked (GlcNAc...) asparagine glycan is linked to N104. The LRRCT domain occupies 228 to 284 (NPFVCDCSLYSLLVFWYRRHFSSVMDFKNDYTCRLWSDSRHSRQVLLLQDSFMNCSD). 2 disulfides stabilise this stretch: C232-C260 and C234-C282. N281, N288, N345, N373, N381, and N384 each carry an N-linked (GlcNAc...) asparagine glycan. One can recognise an Ig-like C2-type domain in the interval 289–379 (GSFRALGFIH…RLLNETVDVT (91 aa)). C310 and C363 form a disulfide bridge. A helical membrane pass occupies residues 399–419 (AFTTLAACVASIVLVLLYLYL). At 420 to 522 (TPCPCKCKTK…FSDTPFVAST (103 aa)) the chain is on the cytoplasmic side. The disordered stretch occupies residues 501–522 (RGKSDSDSVNSVFSDTPFVAST).

It belongs to the immunoglobulin superfamily. AMIGO family. As to quaternary structure, binds itself as well as AMIGO1 and AMIGO3. As to expression, highest levels in breast, ovary, cervix, and uterus. Lower levels in lung, colon, and rectum. Differentially expressed in 56% of thyroid, 57% of pancreatic and 45% of stomach cancers.

It is found in the cell membrane. The protein resides in the nucleus. Functionally, required for depolarization-dependent survival of cultured cerebellar granule neurons. May mediate homophilic as well as heterophilic cell-cell interaction with AMIGO1 or AMIGO3. May contribute to signal transduction through its intracellular domain. May be required for tumorigenesis of a subset of gastric adenocarcinomas. The protein is Amphoterin-induced protein 2 of Homo sapiens (Human).